The following is a 300-amino-acid chain: uncharacterized protein (300 aa).

In terms of domain architecture, HTH lysR-type spans 10–67 (FDLNLLVIFECIYQHLSISKAAESLYITPSAVSQSLQRLRAQFNDPLFIRSGKGIAPT). A DNA-binding region (H-T-H motif) is located at residues 27–46 (ISKAAESLYITPSAVSQSLQ).

The protein belongs to the LysR transcriptional regulatory family.

This is an uncharacterized protein from Escherichia coli (strain K12).